The following is a 308-amino-acid chain: Acyl transferase (308 aa).

Active-site charge relay system residues include S116, D213, and H243.

It belongs to the LuxD family.

It participates in lipid metabolism; fatty acid reduction for biolumincescence. Functionally, acyl transferase is part of the fatty acid reductase system required for aldehyde biosynthesis; it produces fatty acids for the luminescent reaction. This chain is Acyl transferase, found in Shewanella hanedai (Alteromonas hanedai).